The following is a 414-amino-acid chain: Protein ABHD18 (414 aa).

The signal sequence occupies residues 1–24; sequence MGVSKLDILYRRLLLTKLFIRGWG. N-linked (GlcNAc...) asparagine glycans are attached at residues asparagine 282 and asparagine 307.

Belongs to the AB hydrolase superfamily.

It localises to the secreted. This chain is Protein ABHD18, found in Homo sapiens (Human).